We begin with the raw amino-acid sequence, 721 residues long: Phosphoribosylformylglycinamidine synthase subunit PurL (721 aa).

Residue His-47 is part of the active site. ATP contacts are provided by Tyr-50 and Lys-89. Glu-91 is a binding site for Mg(2+). Residues 92–95 (SHNH) and Arg-114 contribute to the substrate site. Residue His-93 is the Proton acceptor of the active site. Mg(2+) is bound at residue Asp-115. Substrate is bound at residue Gln-238. Asp-266 provides a ligand contact to Mg(2+). 310–312 (ESQ) is a substrate binding site. Positions 490 and 527 each coordinate ATP. Asn-528 contacts Mg(2+). Ser-530 is a substrate binding site.

Belongs to the FGAMS family. Monomer. Part of the FGAM synthase complex composed of 1 PurL, 1 PurQ and 2 PurS subunits.

It is found in the cytoplasm. The enzyme catalyses N(2)-formyl-N(1)-(5-phospho-beta-D-ribosyl)glycinamide + L-glutamine + ATP + H2O = 2-formamido-N(1)-(5-O-phospho-beta-D-ribosyl)acetamidine + L-glutamate + ADP + phosphate + H(+). It participates in purine metabolism; IMP biosynthesis via de novo pathway; 5-amino-1-(5-phospho-D-ribosyl)imidazole from N(2)-formyl-N(1)-(5-phospho-D-ribosyl)glycinamide: step 1/2. In terms of biological role, part of the phosphoribosylformylglycinamidine synthase complex involved in the purines biosynthetic pathway. Catalyzes the ATP-dependent conversion of formylglycinamide ribonucleotide (FGAR) and glutamine to yield formylglycinamidine ribonucleotide (FGAM) and glutamate. The FGAM synthase complex is composed of three subunits. PurQ produces an ammonia molecule by converting glutamine to glutamate. PurL transfers the ammonia molecule to FGAR to form FGAM in an ATP-dependent manner. PurS interacts with PurQ and PurL and is thought to assist in the transfer of the ammonia molecule from PurQ to PurL. This Ruegeria sp. (strain TM1040) (Silicibacter sp.) protein is Phosphoribosylformylglycinamidine synthase subunit PurL.